The sequence spans 64 residues: Large ribosomal subunit protein bL35 (64 aa).

It belongs to the bacterial ribosomal protein bL35 family.

The polypeptide is Large ribosomal subunit protein bL35 (Helicobacter hepaticus (strain ATCC 51449 / 3B1)).